Reading from the N-terminus, the 602-residue chain is NADH-quinone oxidoreductase subunit C/D (602 aa).

The segment at 1–192 (MVNNMTDLTA…DPFELTKAKQ (192 aa)) is NADH dehydrogenase I subunit C. Residues 216 to 602 (DFMFLNLGPN…IDFVMSDVDR (387 aa)) form an NADH dehydrogenase I subunit D region.

It in the N-terminal section; belongs to the complex I 30 kDa subunit family. The protein in the C-terminal section; belongs to the complex I 49 kDa subunit family. In terms of assembly, NDH-1 is composed of 13 different subunits. Subunits NuoB, CD, E, F, and G constitute the peripheral sector of the complex.

Its subcellular location is the cell inner membrane. The catalysed reaction is a quinone + NADH + 5 H(+)(in) = a quinol + NAD(+) + 4 H(+)(out). Functionally, NDH-1 shuttles electrons from NADH, via FMN and iron-sulfur (Fe-S) centers, to quinones in the respiratory chain. The immediate electron acceptor for the enzyme in this species is believed to be ubiquinone. Couples the redox reaction to proton translocation (for every two electrons transferred, four hydrogen ions are translocated across the cytoplasmic membrane), and thus conserves the redox energy in a proton gradient. This Klebsiella pneumoniae subsp. pneumoniae (strain ATCC 700721 / MGH 78578) protein is NADH-quinone oxidoreductase subunit C/D.